The following is a 31-amino-acid chain: Cytochrome b6-f complex subunit 6 (31 aa).

A helical transmembrane segment spans residues T3–I23.

It belongs to the PetL family. As to quaternary structure, the 4 large subunits of the cytochrome b6-f complex are cytochrome b6, subunit IV (17 kDa polypeptide, PetD), cytochrome f and the Rieske protein, while the 4 small subunits are PetG, PetL, PetM and PetN. The complex functions as a dimer.

The protein resides in the plastid. It is found in the chloroplast thylakoid membrane. In terms of biological role, component of the cytochrome b6-f complex, which mediates electron transfer between photosystem II (PSII) and photosystem I (PSI), cyclic electron flow around PSI, and state transitions. PetL is important for photoautotrophic growth as well as for electron transfer efficiency and stability of the cytochrome b6-f complex. This is Cytochrome b6-f complex subunit 6 from Abies homolepis (Nikko fir).